The chain runs to 630 residues: MSGSCAAAEEKEGSRQRLQMKVNEYKENQNMSSVSLRSIQKTVLEKTVKVCLVPFSLSNYKSGQFKLPKSLLDKNSKNEVACKKYKKTEIKKACTRILTSKMEATASSKAESTLQKSSIDVHTENNQRQHKSTSDTVSLGVDTESSQDGDSDEDTTSSLDDFSGLSPYERKRLKNISENANFFASLQLSESAARLREMIEKRQPPETKRKKPKKKENETGCRRSMRLLNVDPSGVSLPVTPTEPTLVADENPLLPPGPLEMIPENRDDNSELFKEFLQTWAEVSKTSSKNIEKELSSLKTYKANLSGMVISEDTVYKVTKGAIFSIAFHPSEIKTLVAAGAKSGQVGLWDLTHQPKEDGVYVFQPHSQPVSCLYFSPANPAHMLSLSYDGTLRCGDISSAVFEEVYRNERSSLSSFDFLAEDASTFIVGHWDGSISLVDRRTPGASYEKLISSSLRKIRTVHVHPVQRQYFITAGLRDTHIYDARRLTPSGSQPLISLTEHTKSIASAYFSPLTGNRIVTTCADCKLRFFDSSCISSQIPLLTTIRHNTITGRWLTRLRAVWDPKQEDCVIIGSMAHPRQVEIFHETGEQVHSFLGGECLVSVCSINAVHPTRYILAGGNSSGKIHVFMN.

Polar residues predominate over residues 105 to 118; sequence TASSKAESTLQKSS. Disordered regions lie at residues 105 to 165, 199 to 219, and 231 to 252; these read TASS…FSGL, IEKR…ENET, and DPSG…DENP. Over residues 145–155 the composition is skewed to acidic residues; it reads SSQDGDSDEDT. 7 WD repeats span residues 318–359, 365–405, 408–448, 453–492, 500–540, 542–572, and 598–630; these read VTKG…KEDG, PHSQ…FEEV, NERS…ASYE, SSLR…PSGS, EHTK…SQIP, LTTI…CVII, and ECLV…VFMN.

It belongs to the WD repeat DDB2/WDR76 family. In terms of assembly, interacts with CUL4A and/or CUL4B.

In terms of biological role, specifically binds 5-hydroxymethylcytosine (5hmC), suggesting that it acts as a specific reader of 5hmC. This Rhinolophus ferrumequinum (Greater horseshoe bat) protein is WD repeat-containing protein 76 (WDR76).